Here is a 214-residue protein sequence, read N- to C-terminus: Probable transaldolase (214 aa).

K83 serves as the catalytic Schiff-base intermediate with substrate.

This sequence belongs to the transaldolase family. Type 3B subfamily.

Its subcellular location is the cytoplasm. The catalysed reaction is D-sedoheptulose 7-phosphate + D-glyceraldehyde 3-phosphate = D-erythrose 4-phosphate + beta-D-fructose 6-phosphate. It functions in the pathway carbohydrate degradation; pentose phosphate pathway; D-glyceraldehyde 3-phosphate and beta-D-fructose 6-phosphate from D-ribose 5-phosphate and D-xylulose 5-phosphate (non-oxidative stage): step 2/3. Transaldolase is important for the balance of metabolites in the pentose-phosphate pathway. This is Probable transaldolase from Leptospira borgpetersenii serovar Hardjo-bovis (strain JB197).